The following is a 598-amino-acid chain: Arylsulfate sulfotransferase AssT (598 aa).

The N-terminal stretch at 1–27 (MFDKYRKTLVAGTVAITLGLSASGVMA) is a signal peptide. 4-methylumbelliferone-binding residues include H279 and H383. A disulfide bridge connects residues C445 and C451. H463 is a 4-methylumbelliferone binding site. H463 (nucleophile; sulfurylated histidine covalent intermediate) is an active-site residue.

Belongs to the aryl sulfotransferase family. In terms of assembly, homodimer. In terms of processing, the disulfide bond is crucial for enzyme activity.

It is found in the periplasm. The catalysed reaction is an aryl sulfate + a phenol = an aryl sulfate + a phenol. The enzyme catalyses 4-methylumbelliferone sulfate + phenol = phenyl sulfate + 4-methylumbelliferone. In terms of biological role, catalyzes the transfer of a sulfate group from a phenyl sulfate ester to other phenolic compounds. In vitro, is able to use 4-methylumbelliferyl sulfate and p-nitrophenyl sulfate (PNS) as donor substrates with phenol as the acceptor substrate. Cannot use 3'-phosphoadenosine-5'-phophosulfate (PAPS), the donor substrate of mammalian sulfotransferase. The protein is Arylsulfate sulfotransferase AssT of Escherichia coli O6:H1 (strain CFT073 / ATCC 700928 / UPEC).